A 202-amino-acid chain; its full sequence is Prohormone-4 (202 aa).

The first 28 residues, 1–28, serve as a signal peptide directing secretion; the sequence is MVQRLCTSVAALSLALSACVFFPRAVMA. Residues 46-86 enclose the LDL-receptor class A domain; the sequence is ACRPYEPFKCPGDDTCISIQYLCDGAPDCQDGYDEDSRLCT. 3 disulfides stabilise this stretch: C47–C61, C55–C74, and C68–C85.

It localises to the secreted. In Apis mellifera (Honeybee), this protein is Prohormone-4.